Reading from the N-terminus, the 240-residue chain is Probable septum site-determining protein MinC (240 aa).

It belongs to the MinC family. As to quaternary structure, interacts with MinD and FtsZ.

Its function is as follows. Cell division inhibitor that blocks the formation of polar Z ring septums. Rapidly oscillates between the poles of the cell to destabilize FtsZ filaments that have formed before they mature into polar Z rings. Prevents FtsZ polymerization. The sequence is that of Probable septum site-determining protein MinC from Chromobacterium violaceum (strain ATCC 12472 / DSM 30191 / JCM 1249 / CCUG 213 / NBRC 12614 / NCIMB 9131 / NCTC 9757 / MK).